The chain runs to 550 residues: Glucose-6-phosphate isomerase (550 aa).

Residue glutamate 356 is the Proton donor of the active site. Catalysis depends on residues histidine 387 and lysine 515.

The protein belongs to the GPI family.

The protein resides in the cytoplasm. It catalyses the reaction alpha-D-glucose 6-phosphate = beta-D-fructose 6-phosphate. Its pathway is carbohydrate biosynthesis; gluconeogenesis. It participates in carbohydrate degradation; glycolysis; D-glyceraldehyde 3-phosphate and glycerone phosphate from D-glucose: step 2/4. Functionally, catalyzes the reversible isomerization of glucose-6-phosphate to fructose-6-phosphate. The chain is Glucose-6-phosphate isomerase from Aliivibrio salmonicida (strain LFI1238) (Vibrio salmonicida (strain LFI1238)).